The sequence spans 359 residues: MSTSKTIVFGLFVATLLVSCNVAANATTQPLFPAILIFGDSTVDTGNNNYHSQTIFKAKHLPYGVDLPGHEANGRYSNGKVISDVIASKLNIKELVPPFLQPNISHQDIVTGVSFASAGAGYDDRSSLSSKAIPVSQQPSMFKNYIARLKGIVGDKKAMEIINNALVVISAGPNDFILNFYDIPTRRLEYPTIHGYQEFILKRLDGFVRELYSLGCRNIVVGGLPPMGCLPIQMTAKMRNILRFCVEQENKDSVLYNQKLVKKLPEIQASLPGSNFLYANVYDPLMDMIQNPSKYGFKETKKGCCGTGYLETTFMCNPLTKTCPNHSDHLFWDSIHPSEAAYNYIGNFVDAQIRGWIKA.

An N-terminal signal peptide occupies residues 1–28 (MSTSKTIVFGLFVATLLVSCNVAANATT). The Nucleophile role is filled by serine 41. Residues asparagine 103 and asparagine 325 are each glycosylated (N-linked (GlcNAc...) asparagine). Active-site residues include aspartate 333 and histidine 336.

This sequence belongs to the 'GDSL' lipolytic enzyme family.

The protein resides in the secreted. The chain is GDSL esterase/lipase At2g30310 from Arabidopsis thaliana (Mouse-ear cress).